A 530-amino-acid polypeptide reads, in one-letter code: Methionine--tRNA ligase (530 aa).

The 'HIGH' region signature appears at 18–28 (YYVNDVPHIGS). Residues cysteine 133, cysteine 136, cysteine 151, and histidine 154 each coordinate Zn(2+). Residues 307–311 (KMGKS) carry the 'KMSKS' region motif. Lysine 310 lines the ATP pocket.

The protein belongs to the class-I aminoacyl-tRNA synthetase family. MetG type 2A subfamily. In terms of assembly, monomer. Zn(2+) serves as cofactor.

The protein resides in the cytoplasm. The catalysed reaction is tRNA(Met) + L-methionine + ATP = L-methionyl-tRNA(Met) + AMP + diphosphate. Is required not only for elongation of protein synthesis but also for the initiation of all mRNA translation through initiator tRNA(fMet) aminoacylation. The chain is Methionine--tRNA ligase from Nostoc sp. (strain PCC 7120 / SAG 25.82 / UTEX 2576).